Here is a 347-residue protein sequence, read N- to C-terminus: Virulence plasmid protein pGP2-D (347 aa).

The protein is Virulence plasmid protein pGP2-D of Chlamydia psittaci (Chlamydophila psittaci).